The sequence spans 295 residues: Nucleotide-binding protein YvcJ (295 aa).

An ATP-binding site is contributed by 16-23 (GMSGAGKT). 67–70 (DLRG) contacts GTP.

This sequence belongs to the RapZ-like family.

Functionally, displays ATPase and GTPase activities. Can also hydrolyze pNPP. May affect the expression of competence via the phosphorylation of a cellular component. The polypeptide is Nucleotide-binding protein YvcJ (yvcJ) (Bacillus subtilis (strain 168)).